The sequence spans 290 residues: 4-hydroxy-tetrahydrodipicolinate synthase (290 aa).

Residue Thr-44 participates in pyruvate binding. Residue Tyr-132 is the Proton donor/acceptor of the active site. Catalysis depends on Lys-160, which acts as the Schiff-base intermediate with substrate. Ile-202 is a pyruvate binding site.

This sequence belongs to the DapA family. Homotetramer; dimer of dimers.

The protein resides in the cytoplasm. The catalysed reaction is L-aspartate 4-semialdehyde + pyruvate = (2S,4S)-4-hydroxy-2,3,4,5-tetrahydrodipicolinate + H2O + H(+). The protein operates within amino-acid biosynthesis; L-lysine biosynthesis via DAP pathway; (S)-tetrahydrodipicolinate from L-aspartate: step 3/4. In terms of biological role, catalyzes the condensation of (S)-aspartate-beta-semialdehyde [(S)-ASA] and pyruvate to 4-hydroxy-tetrahydrodipicolinate (HTPA). The polypeptide is 4-hydroxy-tetrahydrodipicolinate synthase (Pelobacter propionicus (strain DSM 2379 / NBRC 103807 / OttBd1)).